The primary structure comprises 88 residues: Small ribosomal subunit protein bS16c (88 aa).

Belongs to the bacterial ribosomal protein bS16 family.

Its subcellular location is the plastid. The protein resides in the chloroplast. This is Small ribosomal subunit protein bS16c from Solanum bulbocastanum (Wild potato).